The sequence spans 174 residues: Thiol-disulfide oxidoreductase ResA (174 aa).

Residues 11–30 (TVILLLLLAALGYTIYANFF) traverse the membrane as a helical; Signal-anchor for type II membrane protein segment. The Thioredoxin domain occupies 36 to 174 (VAVGSTAPDF…IKQHLESIKP (139 aa)). An intrachain disulfide couples Cys74 to Cys77.

This sequence belongs to the thioredoxin family. ResA subfamily.

The protein localises to the cell membrane. Its pathway is protein modification; cytochrome c assembly. In terms of biological role, thiol-disulfide oxidoreductase which is required in disulfide reduction during c-type cytochrome synthesis. May accept reducing equivalents from CcdA, leading to breakage of disulfide bonds in apocytochrome c; following this reduction heme can be covalently attached. The polypeptide is Thiol-disulfide oxidoreductase ResA (Geobacillus thermodenitrificans (strain NG80-2)).